The sequence spans 104 residues: Chemokine-like protein MC148 (104 aa).

As to quaternary structure, interacts with host CXCL12.

Functionally, plays a role in antagonizing the chemotaxis of multiple leukocyte subsets induced by CC and CXC chemokines. Displaces the interaction between CXCL12 and CXCR4 and thereby inactivates the antiviral activity of host CXCL12. The sequence is that of Chemokine-like protein MC148 (MC148) from Homo sapiens (Human).